A 215-amino-acid polypeptide reads, in one-letter code: Pyridoxine/pyridoxamine 5'-phosphate oxidase (215 aa).

Substrate contacts are provided by residues 9-12 (RRDY) and Lys69. Residues 64–69 (RVLLLK), 79–80 (FT), Lys86, and Gln108 contribute to the FMN site. Residues Tyr126, Arg130, and Ser134 each contribute to the substrate site. Residues 143-144 (QS) and Trp188 each bind FMN. 194–196 (RLH) is a substrate binding site. Arg198 is an FMN binding site.

This sequence belongs to the pyridoxamine 5'-phosphate oxidase family. In terms of assembly, homodimer. FMN is required as a cofactor.

It catalyses the reaction pyridoxamine 5'-phosphate + O2 + H2O = pyridoxal 5'-phosphate + H2O2 + NH4(+). The enzyme catalyses pyridoxine 5'-phosphate + O2 = pyridoxal 5'-phosphate + H2O2. It participates in cofactor metabolism; pyridoxal 5'-phosphate salvage; pyridoxal 5'-phosphate from pyridoxamine 5'-phosphate: step 1/1. It functions in the pathway cofactor metabolism; pyridoxal 5'-phosphate salvage; pyridoxal 5'-phosphate from pyridoxine 5'-phosphate: step 1/1. In terms of biological role, catalyzes the oxidation of either pyridoxine 5'-phosphate (PNP) or pyridoxamine 5'-phosphate (PMP) into pyridoxal 5'-phosphate (PLP). The polypeptide is Pyridoxine/pyridoxamine 5'-phosphate oxidase (Pseudomonas putida (strain W619)).